The chain runs to 374 residues: Translocating chain-associated membrane protein 1 (374 aa).

At 1–29 (MAIRKKSSKNPPVLSHEFVLQNHADIVSC) the chain is on the cytoplasmic side. The chain crosses the membrane as a helical span at residues 30–50 (VAMVFLLGLMFEITAKVSIIF). The Lumenal portion of the chain corresponds to 51 to 81 (VTLQYNVTLPATEEQATESAFLYYYGIKDLA). N-linked (GlcNAc...) asparagine glycosylation occurs at N56. Residues 82-102 (TVFFYMLVAIIIHAIIQEYVL) form a helical membrane-spanning segment. At 103 to 121 (DKINRRMHFSKTKHSKFNE) the chain is on the cytoplasmic side. Residues 117–326 (SKFNESGQLS…NFQLRRWREH (210 aa)) enclose the TLC domain. Residues 122 to 142 (SGQLSAFYLFSCIWGTFILIS) form a helical membrane-spanning segment. The Lumenal portion of the chain corresponds to 143–159 (ENYISDPTILWRAYPHN). The chain crosses the membrane as a helical span at residues 160 to 180 (LMTFQMKFFYISQLAYWFHAF). The Cytoplasmic portion of the chain corresponds to 181 to 192 (PELYFQKTKKED). Residues 193–213 (IPRQLVYIGLYLFHIAGAYLL) form a helical membrane-spanning segment. Residue N214 is a topological domain, lumenal. Residues 215-235 (LNHLGLVLLVLHYFVEFLFHI) form a helical membrane-spanning segment. Residues 236–251 (SRLFYFSDEKYQKGFS) lie on the Cytoplasmic side of the membrane. A helical transmembrane segment spans residues 252–272 (LWAVLFVLGRLLTLILSVLTV). Residues 273-297 (GFGLARAENQKLDFSTGNFNVLAVR) lie on the Lumenal side of the membrane. A helical membrane pass occupies residues 298-318 (IAVLASICITQAFMMWKFINF). Over 319 to 374 (QLRRWREHSAFQAPAVKKKPPVTKGRSSRKGTENGVNGTVTSNGADSPRNRKEKSS) the chain is Cytoplasmic. Residues 331–374 (APAVKKKPPVTKGRSSRKGTENGVNGTVTSNGADSPRNRKEKSS) are disordered. The segment covering 334–347 (VKKKPPVTKGRSSR) has biased composition (basic residues). Over residues 352 to 363 (NGVNGTVTSNGA) the composition is skewed to polar residues. S365 bears the Phosphoserine mark.

This sequence belongs to the TRAM family. Interacts with SEC61B. May interact with Derlin-1/DERL1. N-glycosylated.

It localises to the endoplasmic reticulum membrane. Functionally, involved in the translocation of nascent protein chains into or through the endoplasmic reticulum (ER) membrane by facilitating the proper chain positioning at the SEC61 channel. Regulates the exposure of nascent secretory protein chain to the cytosol during translocation into the ER. May affect the phospholipid bilayer in the vicinity of the lateral gate of the SEC61 channel, thereby facilitating ER protein transport. Intimately associates with transmembrane (TM) domain of nascent membrane proteins during the entire integration process into the ER membrane. Associates with the second TM domain of G-protein-coupled receptor opsin/OPSD nascent chain in the ER membrane, which may facilitate its integration into the membrane. Under conditions of ER stress, participates in the disposal of misfolded ER membrane proteins during the unfolded protein response (UPR), an integrated stress response (ISR) pathway, by selectively retrotranslocating misfolded ER-membrane proteins from the ER into the cytosol where they are ubiquitinated and degraded by the proteasome. The chain is Translocating chain-associated membrane protein 1 (TRAM1) from Bos taurus (Bovine).